Here is a 194-residue protein sequence, read N- to C-terminus: 3-isopropylmalate dehydratase small subunit (194 aa).

The protein belongs to the LeuD family. LeuD type 1 subfamily. As to quaternary structure, heterodimer of LeuC and LeuD.

The catalysed reaction is (2R,3S)-3-isopropylmalate = (2S)-2-isopropylmalate. It participates in amino-acid biosynthesis; L-leucine biosynthesis; L-leucine from 3-methyl-2-oxobutanoate: step 2/4. Functionally, catalyzes the isomerization between 2-isopropylmalate and 3-isopropylmalate, via the formation of 2-isopropylmaleate. The polypeptide is 3-isopropylmalate dehydratase small subunit (Anoxybacillus flavithermus (strain DSM 21510 / WK1)).